A 41-amino-acid polypeptide reads, in one-letter code: Bacteriocin bavaricin-A (41 aa).

It belongs to the bacteriocin class IIA/YGNGV family.

It is found in the secreted. Functionally, this heat stable bacteriocin shows activity against species of Lactobacillus, Listeria monocytogenes, Pediococcus, Enterococcus, Leuconostoc and Lactococcus. This Latilactobacillus sakei (Lactobacillus sakei) protein is Bacteriocin bavaricin-A.